The following is a 272-amino-acid chain: Centromere protein V-like protein 3 (272 aa).

Positions 1 to 17 are enriched in basic residues; sequence MGRVRNRATAQRRRRKR. Disordered regions lie at residues 1–23 and 65–95; these read MGRVRNRATAQRRRRKRPGDPPA and RRAREAGSRDPLPSAPLPDPPAPAESPKELD. Pro residues predominate over residues 77 to 88; sequence PSAPLPDPPAPA. The CENP-V/GFA domain maps to 133–246; that stretch reads HTGGCHCGAV…EEVGGGDPGE (114 aa). Zn(2+)-binding residues include C137, C139, C157, C159, C162, C201, and C204. The disordered stretch occupies residues 240 to 272; that stretch reads GGGDPGEEAAEEHKAIHKTSSQSAPACPREQEQ.

This sequence belongs to the Gfa family. The cofactor is Zn(2+).

In Homo sapiens (Human), this protein is Centromere protein V-like protein 3.